The following is a 307-amino-acid chain: Beta-lactamase (307 aa).

The tat-type signal signal peptide spans 1–34; that stretch reads MRNRGFGRRELLVAMAMLVSVTGCARHASGARPA. S84 functions as the Acyl-ester intermediate in the catalytic mechanism. S142 contributes to the substrate binding site. Catalysis depends on E182, which acts as the Proton acceptor. 251–253 contacts substrate; the sequence is TGT.

It belongs to the class-A beta-lactamase family. Monomer. In terms of processing, exported by the Tat system. The position of the signal peptide cleavage has not been experimentally proven.

It is found in the periplasm. The protein resides in the secreted. The catalysed reaction is a beta-lactam + H2O = a substituted beta-amino acid. Is inhibited by clavulanate. Functionally, extended spectrum beta-lactamase (ESBL) that inactivates beta-lactam antibiotics by hydrolyzing the amide group of the beta-lactam ring. Displays high levels of penicillinase and cephalosporinase activity as well as measurable activity with carbapenems, including imipenem and meropenem. Plays a primary role in the intrinsic resistance of mycobacteria to beta-lactam antibiotics. This is Beta-lactamase (blaC) from Mycobacterium bovis (strain ATCC BAA-935 / AF2122/97).